A 312-amino-acid chain; its full sequence is Olfactory receptor 7D4 (312 aa).

Residues 1–25 lie on the Extracellular side of the membrane; the sequence is MEAENLTELSKFLLLGLSDDPELQP. Residue Asn-5 is glycosylated (N-linked (GlcNAc...) asparagine). A helical membrane pass occupies residues 26 to 46; the sequence is VLFGLFLSMYLVTVLGNLLII. Residues 47–54 are Cytoplasmic-facing; the sequence is LAVSSDSH. A helical membrane pass occupies residues 55–75; it reads LHTPMYFFLSNLSFVDICFIS. Residues 76–99 lie on the Extracellular side of the membrane; sequence TTVPKMLVSIQARSKDISYMGCLT. A disulfide bond links Cys-97 and Cys-189. The chain crosses the membrane as a helical span at residues 100–120; that stretch reads QVYFLMMFAGMDTFLLAVMAY. Over 121–139 the chain is Cytoplasmic; sequence DRFVAICHPLHYTVIMNPC. Residues 140 to 160 form a helical membrane-spanning segment; sequence LCGLLVLASWFIIFWFSLVHI. The Extracellular segment spans residues 161 to 197; the sequence is LLMKRLTFSTGTEIPHFFCEPAQVLKVACSNTLLNNI. Residues 198 to 217 traverse the membrane as a helical segment; sequence VLYVATALLGVFPVAGILFS. The Cytoplasmic portion of the chain corresponds to 218–237; sequence YSQIVSSLMGMSSTKGKYKA. The chain crosses the membrane as a helical span at residues 238-258; sequence FSTCGSHLCVVSLFYGTGLGV. Over 259–271 the chain is Extracellular; that stretch reads YLSSAVTHSSQSS. The chain crosses the membrane as a helical span at residues 272-292; that stretch reads STASVMYAMVTPMLNPFIYSL. Over 293–312 the chain is Cytoplasmic; sequence RNKDVKGALERLLSRADSCP.

It belongs to the G-protein coupled receptor 1 family. Nasal olfactory epithelium.

It localises to the cell membrane. Functionally, odorant receptor. Selectively activated by androstenone and the related odorous steroid androstadienone. This chain is Olfactory receptor 7D4 (OR7D4), found in Homo sapiens (Human).